We begin with the raw amino-acid sequence, 410 residues long: MTTDLNQNPYLVRAQQLLCRVPLIDGHNDFPFIIRGLYQNNLTRASLNDLPIGQTDISRLRQGSVGGQFWSAYVPNPVHSDKESDEAYLECLRQTLQQIDVIHRMVSEHPDVFGLAQSAADVWKIFRAGRIASLIGIEGLHQIAHSPSALRMMHKLGVRYATLCHTKNNRYCDSAVDRHTSSPWSEYGGQTHDPGDEPSRNVRTGFHSLTLKYLTAVHGRIVDLSHTSEATQRDAIAISKAPVIFSHSASSSLTPSPRNVTDEILHQLKRNGGLIMVCFLRDLVNSADDANTTGSRVVDHILYIAETIGYDHVGIGSDFDGMLEGPLGLDDVSRFPELVADLFRRGVSEERIEKIVGLNTLRVMKQVEDVAVREQAEGSTGVLCDVVKPIWTAEQRQMLAEQGRTRGLRP.

3 residues coordinate Zn(2+): His-27, Asp-29, and Glu-138. Position 165 (His-165) interacts with substrate. Positions Thr-180–Arg-200 are disordered. Residues Arg-258 and Asp-318 each coordinate substrate.

The protein belongs to the metallo-dependent hydrolases superfamily. Peptidase M19 family. It depends on Zn(2+) as a cofactor.

The enzyme catalyses an L-aminoacyl-L-amino acid + H2O = 2 an L-alpha-amino acid. The protein operates within mycotoxin biosynthesis. In terms of biological role, dipeptidase; part of the gene cluster that mediates the biosynthesis of acetylaranotin, a member of the epipolythiodioxopiperazine (ETP) class of toxins characterized by a disulfide-bridged cyclic dipeptide. The first step of acetylaranotin biosynthesis is performed by the NRPS ataP which produces diketopiperazine cyclo-L-Phe-L-Phe via the condensation of 2 phenylalanines (L-Phe). The ataC domain of ataTC then catalyzes the formation of bishydroxylation of cyclo-L-Phe-L-Phe. The glutathione S-transferase domain ataG in ataIMG further catalyzes the conjugation of two glutathiones to the bishydroxylated intermediate. Next, the dipeptidase ataJ removes the Glu residues. The following step is performed by the carbon sulfur lyase domain ataI of ataIMG which may convert the bis-cysteinyl adduct to yield an epidithiol intermediate. The ataT domain from ataTC then catalyzes the oxidation of the free dithiols, followed by a cyclization step catalyzed by the cytochrome P450 ataF. AtaF probably acts as an epoxidase to promote a dual epoxidation formation at C8 and C9 along with C8' and C9', followed by the spontaneous nucleophilic attack of the amide nitrogens N10 and N10' to yield an intermediate with the pyrrolidine partial structure. The final steps of acetylaranotin biosynthesis involve the acetylation and ring rearrangement of an epitetrathiodiketopiperazine intermediate to produce acetylaranotin. AtaH probably catalyzes the acetylation of epitetrathiodiketopiperazine to produce a diacetate and ataY is responsible for the formation of the dihydrooxepin moiety that converts the diacetate intermediate to acetylaranotin via acetylapoaranotin. Both enzymes could function independently in the absence of the other. The acetylaranotin bis-thiomethyltransferase ataS located outside of acetylaranotin gene cluster is the main thiomethyltransferase responsible for converting acetylaranotin and its related intermediates to their methylated forms. This is Dipeptidase ataJ from Aspergillus terreus (strain NIH 2624 / FGSC A1156).